A 175-amino-acid chain; its full sequence is Crossover junction endodeoxyribonuclease RuvC (175 aa).

Active-site residues include Asp-11, Glu-71, and His-143. Positions 11, 71, and 143 each coordinate Mg(2+).

Belongs to the RuvC family. As to quaternary structure, homodimer which binds Holliday junction (HJ) DNA. The HJ becomes 2-fold symmetrical on binding to RuvC with unstacked arms; it has a different conformation from HJ DNA in complex with RuvA. In the full resolvosome a probable DNA-RuvA(4)-RuvB(12)-RuvC(2) complex forms which resolves the HJ. It depends on Mg(2+) as a cofactor.

It is found in the cytoplasm. The enzyme catalyses Endonucleolytic cleavage at a junction such as a reciprocal single-stranded crossover between two homologous DNA duplexes (Holliday junction).. Its function is as follows. The RuvA-RuvB-RuvC complex processes Holliday junction (HJ) DNA during genetic recombination and DNA repair. Endonuclease that resolves HJ intermediates. Cleaves cruciform DNA by making single-stranded nicks across the HJ at symmetrical positions within the homologous arms, yielding a 5'-phosphate and a 3'-hydroxyl group; requires a central core of homology in the junction. The consensus cleavage sequence is 5'-(A/T)TT(C/G)-3'. Cleavage occurs on the 3'-side of the TT dinucleotide at the point of strand exchange. HJ branch migration catalyzed by RuvA-RuvB allows RuvC to scan DNA until it finds its consensus sequence, where it cleaves and resolves the cruciform DNA. The sequence is that of Crossover junction endodeoxyribonuclease RuvC from Parvibaculum lavamentivorans (strain DS-1 / DSM 13023 / NCIMB 13966).